Here is a 219-residue protein sequence, read N- to C-terminus: MRILLVEDDTLIGDGIKAGLSKMGFSVDWFTEGRPGKEALYSAPYDAVILDLTLPGMDGRDILREWREKGKQEPVLILTARDALAERVEGLRLGADDYLCKPFALIEVAARLEALVRRASGQASSELRHGQVTLNPGNLVATLAGEPLALKPKEFALLELLLRNKGRVLPRKLIEEKLYNWDDDVSSNAVEVHVHHLRRKLGSEFIRTVHGIGYTLGDA.

One can recognise a Response regulatory domain in the interval 2–116 (RILLVEDDTL…EVAARLEALV (115 aa)). Residue Asp-51 is modified to 4-aspartylphosphate. The ompR/PhoB-type DNA-binding region spans 124–218 (SSELRHGQVT…VHGIGYTLGD (95 aa)).

Post-translationally, phosphorylated by QseC.

The protein localises to the cytoplasm. Its function is as follows. Member of a two-component regulatory system QseB/QseC. Activates the flagella regulon by activating transcription of flhDC. This chain is Transcriptional regulatory protein QseB (qseB), found in Salmonella typhimurium (strain LT2 / SGSC1412 / ATCC 700720).